The primary structure comprises 100 residues: Aspartyl/glutamyl-tRNA(Asn/Gln) amidotransferase subunit C (100 aa).

The protein belongs to the GatC family. In terms of assembly, heterotrimer of A, B and C subunits.

It carries out the reaction L-glutamyl-tRNA(Gln) + L-glutamine + ATP + H2O = L-glutaminyl-tRNA(Gln) + L-glutamate + ADP + phosphate + H(+). The enzyme catalyses L-aspartyl-tRNA(Asn) + L-glutamine + ATP + H2O = L-asparaginyl-tRNA(Asn) + L-glutamate + ADP + phosphate + 2 H(+). Allows the formation of correctly charged Asn-tRNA(Asn) or Gln-tRNA(Gln) through the transamidation of misacylated Asp-tRNA(Asn) or Glu-tRNA(Gln) in organisms which lack either or both of asparaginyl-tRNA or glutaminyl-tRNA synthetases. The reaction takes place in the presence of glutamine and ATP through an activated phospho-Asp-tRNA(Asn) or phospho-Glu-tRNA(Gln). The polypeptide is Aspartyl/glutamyl-tRNA(Asn/Gln) amidotransferase subunit C (Streptococcus pneumoniae serotype 19F (strain G54)).